A 782-amino-acid polypeptide reads, in one-letter code: Cyclic nucleotide-gated channel beta-3 (782 aa).

Disordered stretches follow at residues 1-111 (MFKS…PKSK) and 147-168 (GDIS…PSTQ). The Cytoplasmic portion of the chain corresponds to 1-213 (MFKSLTIKSN…SIDSYTDRLY (213 aa)). Basic and acidic residues-rich tracts occupy residues 13 to 25 (KPRE…KQDP) and 57 to 73 (EESH…KNSL). Polar residues-rich tracts occupy residues 74–83 (RDLTTNPNHQ) and 152–168 (PEAS…PSTQ). A helical membrane pass occupies residues 214–237 (LLWLLLVTIAYNWNCWLIPLRLVF). At 238-244 (PYQTPDN) the chain is on the extracellular side. The helical transmembrane segment at 245-265 (THYWFITDITCDIIYLCDMLL) threads the bilayer. Topologically, residues 266–294 (IQPRLQFIKGGDIMVDSNELKRHYRSSTK) are cytoplasmic. The chain crosses the membrane as a helical span at residues 295-312 (FQLDVASVMPFDVFYLFF). The Extracellular portion of the chain corresponds to 313-315 (GFN). A helical membrane pass occupies residues 316–330 (PVFRMNRILKYTSFF). Residues 331–343 (EFNHHLESIMDKA) are Cytoplasmic-facing. The tract at residues 343-442 (AYIYRVIRTT…IGQMQDVIGA (100 aa)) is ion conduction pathway. Residues 344–366 (YIYRVIRTTGYLLYTLHINACIY) form a helical membrane-spanning segment. Residues 367–388 (YWASDYEGIGSTKWVYNGEGNK) are Extracellular-facing. Helical transmembrane passes span 389–415 (YLRC…SFEI) and 416–440 (VFQL…QDVI). A selectivity filter region spans residues 402 to 405 (TIGG). Residues 441–782 (GAATANQNNF…TIEVKEKAKQ (342 aa)) are Cytoplasmic-facing. The segment at 445-521 (ANQNNFRISM…SIISKVELFK (77 aa)) is C-linker. The tract at residues 525–641 (TQMIYDMLLR…LLMKKASVLL (117 aa)) is cyclic nucleotide-binding domain. Residues glycine 586, glutamate 587, arginine 599, and threonine 600 each contribute to the 3',5'-cyclic GMP site. Positions 692–724 (EQTIQKTSENSEEGGGKRREYEDKEREPSEKIL) are disordered. The segment covering 705 to 724 (GGGKRREYEDKEREPSEKIL) has biased composition (basic and acidic residues).

The protein belongs to the cyclic nucleotide-gated cation channel (TC 1.A.1.5) family. CNGB3 subfamily. As to quaternary structure, forms heterotetrameric channels composed of CNGA3 and CNGB3 subunits with 3:1 stoichiometry.

It is found in the cell membrane. The enzyme catalyses Ca(2+)(in) = Ca(2+)(out). The catalysed reaction is Na(+)(in) = Na(+)(out). It catalyses the reaction K(+)(in) = K(+)(out). It carries out the reaction NH4(+)(in) = NH4(+)(out). The enzyme catalyses Rb(+)(in) = Rb(+)(out). The catalysed reaction is Li(+)(in) = Li(+)(out). It catalyses the reaction Cs(+)(in) = Cs(+)(out). Pore-forming subunit of the cone cyclic nucleotide-gated channel. Mediates cone photoresponses at bright light converting transient changes in intracellular cGMP levels into electrical signals. In the dark, cGMP levels are high and keep the channel open enabling a steady inward current carried by Na(+) and Ca(2+) ions that leads to membrane depolarization and neurotransmitter release from synaptic terminals. Upon photon absorption cGMP levels decline leading to channel closure and membrane hyperpolarization that ultimately slows neurotransmitter release and signals the presence of light, the end point of the phototransduction cascade. Conducts cGMP- and cAMP-gated ion currents, with permeability for monovalent and divalent cations. The chain is Cyclic nucleotide-gated channel beta-3 from Canis lupus familiaris (Dog).